A 124-amino-acid chain; its full sequence is Small ribosomal subunit protein eS6 (124 aa).

It belongs to the eukaryotic ribosomal protein eS6 family.

The chain is Small ribosomal subunit protein eS6 from Methanococcus maripaludis (strain C6 / ATCC BAA-1332).